The following is a 164-amino-acid chain: B-phycoerythrin alpha chain (164 aa).

(2R,3E)-phycoerythrobilin is bound by residues Cys-82 and Cys-139.

Belongs to the phycobiliprotein family. As to quaternary structure, heteromer of 6 alpha, 6 beta and one gamma chain. In terms of processing, contains two covalently linked bilin chromophores.

The protein resides in the plastid. Its subcellular location is the chloroplast thylakoid membrane. Its function is as follows. Light-harvesting photosynthetic bile pigment-protein from the phycobiliprotein complex. The sequence is that of B-phycoerythrin alpha chain (cpeA) from Rhodella violacea (Red alga).